Here is a 243-residue protein sequence, read N- to C-terminus: Zinc import ATP-binding protein ZnuC (243 aa).

Residues 4–219 (ITVENLSVRY…PEYRALFGTG (216 aa)) form the ABC transporter domain. Residue 36 to 43 (GPNGSGKT) coordinates ATP.

The protein belongs to the ABC transporter superfamily. Zinc importer (TC 3.A.1.15.5) family. As to quaternary structure, the complex is composed of two ATP-binding proteins (ZnuC), two transmembrane proteins (ZnuB) and a solute-binding protein (ZnuA).

It localises to the cell inner membrane. It catalyses the reaction Zn(2+)(out) + ATP(in) + H2O(in) = Zn(2+)(in) + ADP(in) + phosphate(in) + H(+)(in). In terms of biological role, part of the ABC transporter complex ZnuABC involved in zinc import. Responsible for energy coupling to the transport system. In Jannaschia sp. (strain CCS1), this protein is Zinc import ATP-binding protein ZnuC.